Consider the following 483-residue polypeptide: Shaker-related potassium channel tsha2 (483 aa).

Residues 1–165 (MTVVSCEIQD…YPESSGPARM (165 aa)) are Cytoplasmic-facing. A helical transmembrane segment spans residues 166 to 186 (IAVVSVSVIVISIVIFCLETL). Topologically, residues 187 to 220 (PQFREDTSANLPLSNHHTTNGTTLHKKPNLFTDP) are extracellular. A helical transmembrane segment spans residues 221–241 (FFMVETLCIVWFSFEFLVRFL). Residues 242–252 (SCPSKPAFFKN) lie on the Cytoplasmic side of the membrane. The S-palmitoyl cysteine moiety is linked to residue Cys-243. The helical transmembrane segment at 253–273 (AMNSIDILAIAPYFITLGLEL) threads the bilayer. Over 274–324 (AEQQEAGSEQAMSLAILRVIRLVRVFRIFKLSRHSKGLQILGQTLHASISE) the chain is Extracellular. The helical; Voltage-sensor transmembrane segment at 325 to 345 (LGLLIFFLLIGVILFSSAVYF) threads the bilayer. The Cytoplasmic portion of the chain corresponds to 346–353 (AEADDPES). A helical membrane pass occupies residues 354 to 374 (GFSSIPAAFWWAVVSMTTVGY). The short motif at 371-376 (TVGYGD) is the Selectivity filter element. Residues 375-385 (GDMCPVTIGGK) are Extracellular-facing. A helical transmembrane segment spans residues 386 to 406 (IVGSMCAIAGVLTIALPVPVI). Over 407-483 (VSNFNYFYHR…EHYTGKLTDV (77 aa)) the chain is Cytoplasmic. The residue at position 426 (Tyr-426) is a Phosphotyrosine. Thr-430 carries the post-translational modification Phosphothreonine. The segment covering 440–452 (EFKSTSDSRQSLT) has biased composition (polar residues). A disordered region spans residues 440-459 (EFKSTSDSRQSLTKSEDTEE). Positions 481 to 483 (TDV) match the PDZ-binding motif.

The protein belongs to the potassium channel family. A (Shaker) (TC 1.A.1.2) subfamily. Heterotetramer of potassium channel proteins. Binds PDZ domains of dlg1, dlg2 and dlg4. Expressed in oligodendrocytes and astrocytes.

It localises to the membrane. Its function is as follows. Mediates the voltage-dependent potassium ion permeability of excitable membranes. Assuming opened or closed conformations in response to the voltage difference across the membrane, the protein forms a potassium-selective channel through which potassium ions may pass in accordance with their electrochemical gradient. The sequence is that of Shaker-related potassium channel tsha2 from Oncorhynchus mykiss (Rainbow trout).